The following is a 329-amino-acid chain: Elongation factor Ts (329 aa).

Positions 79–82 are involved in Mg(2+) ion dislocation from EF-Tu; sequence TDFV.

Belongs to the EF-Ts family.

It localises to the cytoplasm. Associates with the EF-Tu.GDP complex and induces the exchange of GDP to GTP. It remains bound to the aminoacyl-tRNA.EF-Tu.GTP complex up to the GTP hydrolysis stage on the ribosome. The protein is Elongation factor Ts of Phocaeicola vulgatus (strain ATCC 8482 / DSM 1447 / JCM 5826 / CCUG 4940 / NBRC 14291 / NCTC 11154) (Bacteroides vulgatus).